A 366-amino-acid chain; its full sequence is Chorismate synthase (366 aa).

NADP(+)-binding residues include R48 and R54. FMN contacts are provided by residues 125 to 127, 238 to 239, G278, 293 to 297, and R319; these read RSS, NA, and KPTSS.

It belongs to the chorismate synthase family. As to quaternary structure, homotetramer. Requires FMNH2 as cofactor.

It carries out the reaction 5-O-(1-carboxyvinyl)-3-phosphoshikimate = chorismate + phosphate. It functions in the pathway metabolic intermediate biosynthesis; chorismate biosynthesis; chorismate from D-erythrose 4-phosphate and phosphoenolpyruvate: step 7/7. Catalyzes the anti-1,4-elimination of the C-3 phosphate and the C-6 proR hydrogen from 5-enolpyruvylshikimate-3-phosphate (EPSP) to yield chorismate, which is the branch point compound that serves as the starting substrate for the three terminal pathways of aromatic amino acid biosynthesis. This reaction introduces a second double bond into the aromatic ring system. This chain is Chorismate synthase, found in Ralstonia nicotianae (strain ATCC BAA-1114 / GMI1000) (Ralstonia solanacearum).